The sequence spans 1405 residues: Xanthine dehydrogenase (1405 aa).

The region spanning 17–104 (NKLTFYVNGV…GKHLITVEGI (88 aa)) is the 2Fe-2S ferredoxin-type domain. Positions 56, 61, 64, 86, 125, 128, 161, and 163 each coordinate [2Fe-2S] cluster. The FAD-binding PCMH-type domain occupies 288-474 (FGNEQKVWFR…TKIFVPETVP (187 aa)). FAD-binding positions include 316 to 323 (IVGGASEI), F397, 407 to 411 (TPAGN), D420, I464, and K483. Mo-molybdopterin-binding residues include Q833 and F864. Residues E868 and R946 each coordinate substrate. Residue R978 participates in Mo-molybdopterin binding. Residue F980 coordinates substrate. Position 1147 (A1147) interacts with Mo-molybdopterin. E1333 serves as the catalytic Proton acceptor.

Belongs to the xanthine dehydrogenase family. As to quaternary structure, homodimer. Requires Mo-molybdopterin as cofactor. The cofactor is [2Fe-2S] cluster. It depends on FAD as a cofactor.

It is found in the cytoplasm. The enzyme catalyses hypoxanthine + NAD(+) + H2O = xanthine + NADH + H(+). It catalyses the reaction xanthine + NAD(+) + H2O = urate + NADH + H(+). The protein operates within purine metabolism. Completely inhibited by allopurinol and significantly inhibited by adenine. Inhibited by Fe(2+), Cd(2+) and Zn(2+) and strongly inhibited by Cu(2+). Mg(2+) and Mo(2+) have no effect on activity. Its function is as follows. Key enzyme in purine degradation. Catalyzes the oxidation of hypoxanthine to xanthine. Catalyzes the oxidation of xanthine to uric acid. Oxidizes xanthine, hypoxanthine and pterine at high rates. Can also act on purine and guanine. The sequence is that of Xanthine dehydrogenase from Blastobotrys adeninivorans (Yeast).